A 129-amino-acid chain; its full sequence is Small ribosomal subunit protein uS11 (129 aa).

This sequence belongs to the universal ribosomal protein uS11 family. In terms of assembly, part of the 30S ribosomal subunit. Interacts with proteins S7 and S18. Binds to IF-3.

Located on the platform of the 30S subunit, it bridges several disparate RNA helices of the 16S rRNA. Forms part of the Shine-Dalgarno cleft in the 70S ribosome. The polypeptide is Small ribosomal subunit protein uS11 (Francisella tularensis subsp. mediasiatica (strain FSC147)).